Consider the following 370-residue polypeptide: 3-isopropylmalate dehydrogenase (370 aa).

77-90 (GPKWDAVPYDARPE) contributes to the NAD(+) binding site. Substrate contacts are provided by Arg-97, Arg-107, Arg-135, and Asp-226. Asp-226, Asp-250, and Asp-254 together coordinate Mg(2+). 290–302 (GSAPDIAGKGLAN) is a binding site for NAD(+).

The protein belongs to the isocitrate and isopropylmalate dehydrogenases family. LeuB type 1 subfamily. In terms of assembly, homodimer. Mg(2+) serves as cofactor. It depends on Mn(2+) as a cofactor.

Its subcellular location is the cytoplasm. The enzyme catalyses (2R,3S)-3-isopropylmalate + NAD(+) = 4-methyl-2-oxopentanoate + CO2 + NADH. Its pathway is amino-acid biosynthesis; L-leucine biosynthesis; L-leucine from 3-methyl-2-oxobutanoate: step 3/4. In terms of biological role, catalyzes the oxidation of 3-carboxy-2-hydroxy-4-methylpentanoate (3-isopropylmalate) to 3-carboxy-4-methyl-2-oxopentanoate. The product decarboxylates to 4-methyl-2 oxopentanoate. The polypeptide is 3-isopropylmalate dehydrogenase (Rhodopseudomonas palustris (strain HaA2)).